A 339-amino-acid chain; its full sequence is Phenylalanine--tRNA ligase alpha subunit (339 aa).

Position 247 (Glu247) interacts with Mg(2+).

Belongs to the class-II aminoacyl-tRNA synthetase family. Phe-tRNA synthetase alpha subunit type 1 subfamily. As to quaternary structure, tetramer of two alpha and two beta subunits. Mg(2+) serves as cofactor.

Its subcellular location is the cytoplasm. The catalysed reaction is tRNA(Phe) + L-phenylalanine + ATP = L-phenylalanyl-tRNA(Phe) + AMP + diphosphate + H(+). The protein is Phenylalanine--tRNA ligase alpha subunit of Deinococcus geothermalis (strain DSM 11300 / CIP 105573 / AG-3a).